A 216-amino-acid chain; its full sequence is Probable GTP-binding protein EngB (216 aa).

The region spanning 26 to 200 is the EngB-type G domain; it reads EGIEIAFAGR…RAKLDTWFAP (175 aa). GTP is bound by residues 34–41, 61–65, 79–82, 146–149, and 179–181; these read GRSNAGKS, GRTQL, DLPG, TKAD, and YSS. Residues S41 and T63 each coordinate Mg(2+).

It belongs to the TRAFAC class TrmE-Era-EngA-EngB-Septin-like GTPase superfamily. EngB GTPase family. It depends on Mg(2+) as a cofactor.

In terms of biological role, necessary for normal cell division and for the maintenance of normal septation. The chain is Probable GTP-binding protein EngB from Vibrio vulnificus (strain YJ016).